The chain runs to 150 residues: Large ribosomal subunit protein uL13 (150 aa).

The protein belongs to the universal ribosomal protein uL13 family. In terms of assembly, part of the 50S ribosomal subunit.

Its function is as follows. This protein is one of the early assembly proteins of the 50S ribosomal subunit, although it is not seen to bind rRNA by itself. It is important during the early stages of 50S assembly. The chain is Large ribosomal subunit protein uL13 from Chlamydia muridarum (strain MoPn / Nigg).